Consider the following 413-residue polypeptide: Probable Xaa-Pro aminopeptidase UREG_07123 (413 aa).

Mn(2+) is bound by residues Asp-194, Asp-205, Glu-340, and Glu-379.

Belongs to the peptidase M24B family. Mn(2+) is required as a cofactor.

It carries out the reaction Release of any N-terminal amino acid, including proline, that is linked to proline, even from a dipeptide or tripeptide.. Catalyzes the removal of a penultimate prolyl residue from the N-termini of peptides. This is Probable Xaa-Pro aminopeptidase UREG_07123 from Uncinocarpus reesii (strain UAMH 1704).